Consider the following 953-residue polypeptide: Catenin alpha-2 (953 aa).

Thr-632 carries the phosphothreonine modification. A phosphoserine mark is found at Ser-640, Ser-651, and Ser-901. The span at 912-927 (EKKPLVKREKPEEFQT) shows a compositional bias: basic and acidic residues. The interval 912–939 (EKKPLVKREKPEEFQTRVRRGSQKKHIS) is disordered. Positions 928–938 (RVRRGSQKKHI) are enriched in basic residues. Phosphoserine is present on Ser-939.

It belongs to the vinculin/alpha-catenin family. As to quaternary structure, interacts with CDH1 and CDH2. Interacts with ZNF639; recruits CTNNA2 to the nucleus. Interacts with F-actin. Expressed in neural tissues, with strongest expression in fetal and adult brain. Expressed in the developing cortical plate and marginal zone of 20-week-old human fetal brain.

It localises to the cell membrane. Its subcellular location is the cytoplasm. The protein resides in the cytoskeleton. The protein localises to the cell junction. It is found in the adherens junction. It localises to the cell projection. Its subcellular location is the axon. The protein resides in the nucleus. Its function is as follows. May function as a linker between cadherin adhesion receptors and the cytoskeleton to regulate cell-cell adhesion and differentiation in the nervous system. Required for proper regulation of cortical neuronal migration and neurite growth. It acts as a negative regulator of Arp2/3 complex activity and Arp2/3-mediated actin polymerization. It thereby suppresses excessive actin branching which would impair neurite growth and stability. Regulates morphological plasticity of synapses and cerebellar and hippocampal lamination during development. Functions in the control of startle modulation. This Homo sapiens (Human) protein is Catenin alpha-2 (CTNNA2).